The sequence spans 71 residues: Protein bdm (71 aa).

In Escherichia coli (strain K12), this protein is Protein bdm (bdm).